Here is a 247-residue protein sequence, read N- to C-terminus: 23S rRNA (guanosine-2'-O-)-methyltransferase RlmB (247 aa).

The S-adenosyl-L-methionine site is built by G197, I217, and L226.

Belongs to the class IV-like SAM-binding methyltransferase superfamily. RNA methyltransferase TrmH family. RlmB subfamily.

The protein resides in the cytoplasm. The enzyme catalyses guanosine(2251) in 23S rRNA + S-adenosyl-L-methionine = 2'-O-methylguanosine(2251) in 23S rRNA + S-adenosyl-L-homocysteine + H(+). Functionally, specifically methylates the ribose of guanosine 2251 in 23S rRNA. This Vibrio parahaemolyticus serotype O3:K6 (strain RIMD 2210633) protein is 23S rRNA (guanosine-2'-O-)-methyltransferase RlmB.